A 532-amino-acid polypeptide reads, in one-letter code: Light-independent protochlorophyllide reductase subunit B (532 aa).

[4Fe-4S] cluster is bound at residue Asp36. Asp282 acts as the Proton donor in catalysis. 417 to 418 (GL) lines the substrate pocket.

This sequence belongs to the ChlB/BchB/BchZ family. Protochlorophyllide reductase is composed of three subunits; BchL, BchN and BchB. Forms a heterotetramer of two BchB and two BchN subunits. It depends on [4Fe-4S] cluster as a cofactor.

It carries out the reaction chlorophyllide a + oxidized 2[4Fe-4S]-[ferredoxin] + 2 ADP + 2 phosphate = protochlorophyllide a + reduced 2[4Fe-4S]-[ferredoxin] + 2 ATP + 2 H2O. It participates in porphyrin-containing compound metabolism; bacteriochlorophyll biosynthesis (light-independent). Its function is as follows. Component of the dark-operative protochlorophyllide reductase (DPOR) that uses Mg-ATP and reduced ferredoxin to reduce ring D of protochlorophyllide (Pchlide) to form chlorophyllide a (Chlide). This reaction is light-independent. The NB-protein (BchN-BchB) is the catalytic component of the complex. The sequence is that of Light-independent protochlorophyllide reductase subunit B from Methylobacterium radiotolerans (strain ATCC 27329 / DSM 1819 / JCM 2831 / NBRC 15690 / NCIMB 10815 / 0-1).